The chain runs to 278 residues: Cell division protein FtsQ (278 aa).

Residues 1 to 6 (MNATLR) are Cytoplasmic-facing. Residues 7-27 (ILAWLIAVALVALPVVAVLNG) traverse the membrane as a helical segment. Topologically, residues 28 to 278 (WVGAERWPLA…SPFAIPGFKT (251 aa)) are periplasmic. One can recognise a POTRA domain in the interval 34 to 103 (WPLARLRVSG…DVLEVHVVEH (70 aa)).

It belongs to the FtsQ/DivIB family. FtsQ subfamily. Part of a complex composed of FtsB, FtsL and FtsQ.

It localises to the cell inner membrane. Essential cell division protein. May link together the upstream cell division proteins, which are predominantly cytoplasmic, with the downstream cell division proteins, which are predominantly periplasmic. May control correct divisome assembly. This is Cell division protein FtsQ from Xanthomonas campestris pv. campestris (strain ATCC 33913 / DSM 3586 / NCPPB 528 / LMG 568 / P 25).